The chain runs to 351 residues: Glycerol-1-phosphate dehydrogenase [NAD(P)+] (351 aa).

Residues 97 to 101 (GKTID) and 119 to 122 (TAPS) each bind NAD(+). Residue aspartate 124 coordinates substrate. Serine 128 lines the NAD(+) pocket. Residue aspartate 171 participates in substrate binding. Aspartate 171 and histidine 251 together coordinate Zn(2+). Histidine 255 contacts substrate. Position 267 (histidine 267) interacts with Zn(2+).

This sequence belongs to the glycerol-1-phosphate dehydrogenase family. In terms of assembly, homodimer. Zn(2+) is required as a cofactor.

It is found in the cytoplasm. It carries out the reaction sn-glycerol 1-phosphate + NAD(+) = dihydroxyacetone phosphate + NADH + H(+). It catalyses the reaction sn-glycerol 1-phosphate + NADP(+) = dihydroxyacetone phosphate + NADPH + H(+). It functions in the pathway membrane lipid metabolism; glycerophospholipid metabolism. In terms of biological role, catalyzes the NAD(P)H-dependent reduction of dihydroxyacetonephosphate (DHAP or glycerone phosphate) to glycerol 1-phosphate (G1P). The G1P thus generated is used as the glycerophosphate backbone of phospholipids in the cellular membranes of Archaea. The chain is Glycerol-1-phosphate dehydrogenase [NAD(P)+] from Metallosphaera sedula (strain ATCC 51363 / DSM 5348 / JCM 9185 / NBRC 15509 / TH2).